We begin with the raw amino-acid sequence, 318 residues long: Electron transfer flavoprotein subunit alpha (318 aa).

257 to 285 (LYIALGISGAIQHRAGMQTSKTIVAVNKD) provides a ligand contact to FAD.

The protein belongs to the ETF alpha-subunit/FixB family. Heterodimer of an alpha and a beta subunit. The cofactor is FAD.

The electron transfer flavoprotein serves as a specific electron acceptor for other dehydrogenases. It transfers the electrons to the main respiratory chain via ETF-ubiquinone oxidoreductase (ETF dehydrogenase). In Mycobacterium tuberculosis (strain CDC 1551 / Oshkosh), this protein is Electron transfer flavoprotein subunit alpha (etfA).